Here is a 160-residue protein sequence, read N- to C-terminus: Eukaryotic translation initiation factor 5A-2 (160 aa).

Basic and acidic residues predominate over residues 1–12 (MSDEEHHFESKA). Residues 1–21 (MSDEEHHFESKADAGASKTFP) are disordered. Hypusine is present on Lys-52.

It belongs to the eIF-5A family. In terms of processing, lys-52 undergoes hypusination, a unique post-translational modification that consists in the addition of a butylamino group from spermidine to lysine side chain, leading to the formation of the unusual amino acid hypusine. eIF-5As are the only known proteins to undergo this modification, which is essential for their function.

Functionally, translation factor that promotes translation elongation and termination, particularly upon ribosome stalling at specific amino acid sequence contexts. Binds between the exit (E) and peptidyl (P) site of the ribosome and promotes rescue of stalled ribosome: specifically required for efficient translation of polyproline-containing peptides as well as other motifs that stall the ribosome. Acts as a ribosome quality control (RQC) cofactor by joining the RQC complex to facilitate peptidyl transfer during CAT tailing step. The polypeptide is Eukaryotic translation initiation factor 5A-2 (Solanum lycopersicum (Tomato)).